We begin with the raw amino-acid sequence, 213 residues long: MKSYQRQFIEFALSKQVLKFGEFTLKSGRKSPYFFNAGLFNTGRDLALLGRFYAEALVDSGIEFDLLFGPAYKGIPIATTTAVALAEHHDLDLPYCFNRKEAKDHGEGGNLVGSALQGRVMLVDDVITAGTAIRESMEIIQANGATLAGVLISLDRQERGRGEISAIQEVERDYNCKVISIITLKDLIAYLEEKPEMAEHLAAVKAYREEFGV.

Lys26 lines the 5-phospho-alpha-D-ribose 1-diphosphate pocket. 34-35 (FF) is a binding site for orotate. 5-phospho-alpha-D-ribose 1-diphosphate is bound by residues 72–73 (YK), Arg99, Lys100, Lys103, His105, and 124–132 (DDVITAGTA). Orotate is bound by residues Thr128 and Arg156.

The protein belongs to the purine/pyrimidine phosphoribosyltransferase family. PyrE subfamily. As to quaternary structure, homodimer. The cofactor is Mg(2+).

The enzyme catalyses orotidine 5'-phosphate + diphosphate = orotate + 5-phospho-alpha-D-ribose 1-diphosphate. Its pathway is pyrimidine metabolism; UMP biosynthesis via de novo pathway; UMP from orotate: step 1/2. In terms of biological role, catalyzes the transfer of a ribosyl phosphate group from 5-phosphoribose 1-diphosphate to orotate, leading to the formation of orotidine monophosphate (OMP). The sequence is that of Orotate phosphoribosyltransferase from Shigella flexneri.